We begin with the raw amino-acid sequence, 204 residues long: UPF0056 membrane protein CT_852 (204 aa).

A run of 6 helical transmembrane segments spans residues T9–L29, H39–G59, L66–I86, I107–G127, I138–S158, and F176–F196.

This sequence belongs to the UPF0056 (MarC) family.

The protein resides in the cell membrane. This chain is UPF0056 membrane protein CT_852, found in Chlamydia trachomatis serovar D (strain ATCC VR-885 / DSM 19411 / UW-3/Cx).